A 151-amino-acid chain; its full sequence is Probable flavodoxin 2 (151 aa).

Positions 4-144 constitute a Flavodoxin-like domain; the sequence is ILLVYATMSG…ELINFGRQFA (141 aa). FMN-binding positions include 10-14 and 88-119; these read TMSGN and VFGSGDTAYEFFCGAVDTLEAKIKERGGDIVL.

The protein belongs to the flavodoxin family. FMN serves as cofactor.

In terms of biological role, low-potential electron donor to a number of redox enzymes. In Bacillus subtilis (strain 168), this protein is Probable flavodoxin 2 (ykuP).